The chain runs to 484 residues: Regulatory protein ViaA (484 aa).

Belongs to the ViaA family. As to quaternary structure, homodimer. Interacts with RavA.

The protein resides in the cytoplasm. In terms of biological role, component of the RavA-ViaA chaperone complex, which may act on the membrane to optimize the function of some of the respiratory chains. ViaA stimulates the ATPase activity of RavA. The chain is Regulatory protein ViaA from Edwardsiella ictaluri (strain 93-146).